A 164-amino-acid chain; its full sequence is uncharacterized protein (164 aa).

Its subcellular location is the mitochondrion. This is an uncharacterized protein from Arabidopsis thaliana (Mouse-ear cress).